A 161-amino-acid polypeptide reads, in one-letter code: Phosphopantetheine adenylyltransferase (161 aa).

Threonine 11 contributes to the substrate binding site. Residues 11–12 (TF) and histidine 19 contribute to the ATP site. Substrate-binding residues include lysine 43, threonine 75, and arginine 89. ATP is bound by residues 90–92 (GLR), glutamate 100, and 125–131 (YSFLSSS).

Belongs to the bacterial CoaD family. Homohexamer. Mg(2+) serves as cofactor.

The protein localises to the cytoplasm. It carries out the reaction (R)-4'-phosphopantetheine + ATP + H(+) = 3'-dephospho-CoA + diphosphate. The protein operates within cofactor biosynthesis; coenzyme A biosynthesis; CoA from (R)-pantothenate: step 4/5. In terms of biological role, reversibly transfers an adenylyl group from ATP to 4'-phosphopantetheine, yielding dephospho-CoA (dPCoA) and pyrophosphate. This chain is Phosphopantetheine adenylyltransferase, found in Listeria welshimeri serovar 6b (strain ATCC 35897 / DSM 20650 / CCUG 15529 / CIP 8149 / NCTC 11857 / SLCC 5334 / V8).